Consider the following 311-residue polypeptide: ATP synthase gamma chain (311 aa).

Residues C67 and C138 are joined by a disulfide bond.

This sequence belongs to the ATPase gamma chain family. As to quaternary structure, F-type ATPases have 2 components, CF(1) - the catalytic core - and CF(0) - the membrane proton channel. CF(1) has five subunits: alpha(3), beta(3), gamma(1), delta(1), epsilon(1). CF(0) has three main subunits: a, b and c.

It localises to the cellular thylakoid membrane. Thiol-modulation by raising the activation threshold of the enzyme upon oxidation of the cysteines, thereby preventing wasteful ATP-hydrolysis. In terms of biological role, produces ATP from ADP in the presence of a proton gradient across the membrane. The gamma chain is believed to be important in regulating ATPase activity and the flow of protons through the CF(0) complex. This is ATP synthase gamma chain (atpG) from Arthrospira platensis (Spirulina platensis).